A 261-amino-acid polypeptide reads, in one-letter code: Cytochrome c oxidase subunit 3 (261 aa).

The Mitochondrial matrix segment spans residues 1–15; that stretch reads MTHQTHAYHMVNPSP. Residues 16 to 34 form a helical membrane-spanning segment; it reads WPLTGALSALLMTSGLIMW. At 35-40 the chain is on the mitochondrial intermembrane side; that stretch reads FHFNST. The helical transmembrane segment at 41–66 threads the bilayer; sequence TLLMLGLTTNMLTMYQWWRDVVREST. Residues 67–72 are Mitochondrial matrix-facing; sequence FQGHHT. A helical transmembrane segment spans residues 73–105; that stretch reads PNVQKGLRYGMILFIISEVLFFTGFFWAFYHSS. Topologically, residues 106–128 are mitochondrial intermembrane; sequence LAPTPELGGCWPPTGINPLNPLE. The chain crosses the membrane as a helical span at residues 129-152; it reads VPLLNTSVLLASGVSITWAHHSLM. The Mitochondrial matrix portion of the chain corresponds to 153 to 155; the sequence is EGN. A helical transmembrane segment spans residues 156–183; it reads RNHMLQALFITIALGVYFTLLQASEYYE. Residues 184-190 lie on the Mitochondrial intermembrane side of the membrane; it reads APFTISD. A helical membrane pass occupies residues 191 to 223; sequence GVYGSTFFVATGFHGLHVIIGSTFLIVCFFRQL. The Mitochondrial matrix portion of the chain corresponds to 224-232; the sequence is KFHFTSNHH. The helical transmembrane segment at 233–256 threads the bilayer; the sequence is FGFEAAAWYWHFVDVVWLFLYVSI. Topologically, residues 257 to 261 are mitochondrial intermembrane; it reads YWWGS.

The protein belongs to the cytochrome c oxidase subunit 3 family. In terms of assembly, component of the cytochrome c oxidase (complex IV, CIV), a multisubunit enzyme composed of 14 subunits. The complex is composed of a catalytic core of 3 subunits MT-CO1, MT-CO2 and MT-CO3, encoded in the mitochondrial DNA, and 11 supernumerary subunits COX4I, COX5A, COX5B, COX6A, COX6B, COX6C, COX7A, COX7B, COX7C, COX8 and NDUFA4, which are encoded in the nuclear genome. The complex exists as a monomer or a dimer and forms supercomplexes (SCs) in the inner mitochondrial membrane with NADH-ubiquinone oxidoreductase (complex I, CI) and ubiquinol-cytochrome c oxidoreductase (cytochrome b-c1 complex, complex III, CIII), resulting in different assemblies (supercomplex SCI(1)III(2)IV(1) and megacomplex MCI(2)III(2)IV(2)).

The protein localises to the mitochondrion inner membrane. It carries out the reaction 4 Fe(II)-[cytochrome c] + O2 + 8 H(+)(in) = 4 Fe(III)-[cytochrome c] + 2 H2O + 4 H(+)(out). Component of the cytochrome c oxidase, the last enzyme in the mitochondrial electron transport chain which drives oxidative phosphorylation. The respiratory chain contains 3 multisubunit complexes succinate dehydrogenase (complex II, CII), ubiquinol-cytochrome c oxidoreductase (cytochrome b-c1 complex, complex III, CIII) and cytochrome c oxidase (complex IV, CIV), that cooperate to transfer electrons derived from NADH and succinate to molecular oxygen, creating an electrochemical gradient over the inner membrane that drives transmembrane transport and the ATP synthase. Cytochrome c oxidase is the component of the respiratory chain that catalyzes the reduction of oxygen to water. Electrons originating from reduced cytochrome c in the intermembrane space (IMS) are transferred via the dinuclear copper A center (CU(A)) of subunit 2 and heme A of subunit 1 to the active site in subunit 1, a binuclear center (BNC) formed by heme A3 and copper B (CU(B)). The BNC reduces molecular oxygen to 2 water molecules using 4 electrons from cytochrome c in the IMS and 4 protons from the mitochondrial matrix. The sequence is that of Cytochrome c oxidase subunit 3 (MT-CO3) from Gazella leptoceros (Sand gazelle).